The chain runs to 323 residues: o-succinylbenzoate synthase (323 aa).

Catalysis depends on Lys134, which acts as the Proton donor. Positions 162, 191, and 214 each coordinate Mg(2+). Lys236 functions as the Proton acceptor in the catalytic mechanism.

It belongs to the mandelate racemase/muconate lactonizing enzyme family. MenC type 1 subfamily. The cofactor is a divalent metal cation.

The catalysed reaction is (1R,6R)-6-hydroxy-2-succinyl-cyclohexa-2,4-diene-1-carboxylate = 2-succinylbenzoate + H2O. It participates in quinol/quinone metabolism; 1,4-dihydroxy-2-naphthoate biosynthesis; 1,4-dihydroxy-2-naphthoate from chorismate: step 4/7. It functions in the pathway quinol/quinone metabolism; menaquinone biosynthesis. Its function is as follows. Converts 2-succinyl-6-hydroxy-2,4-cyclohexadiene-1-carboxylate (SHCHC) to 2-succinylbenzoate (OSB). The chain is o-succinylbenzoate synthase from Yersinia pseudotuberculosis serotype I (strain IP32953).